The primary structure comprises 218 residues: MNGAAPIIPDVRVEPDPSLVVRQLGRVAYEPTWRAMQAFAAQRSAGTADELWLLEHPPVYTLGQAGKREHLIAATDIPVVPIDRGGQITYHGPGQVVAYVLVDLRRRGYGIRELVARLEQAVIDLLAASNVEATRRAGAPGVYVDGAKIAALGLRVKHGCTYHGLAFNVDMDLEPFAAINPCGYPGMAVTQCRDLGLNWSVEQTERALTDALQRAIYS.

The BPL/LPL catalytic domain maps to 45 to 218; that stretch reads AGTADELWLL…TDALQRAIYS (174 aa). Substrate-binding positions include 84-91, 151-153, and 164-166; these read RGGQITYH, ALG, and GLA. Cys182 (acyl-thioester intermediate) is an active-site residue.

It belongs to the LipB family.

It is found in the cytoplasm. The catalysed reaction is octanoyl-[ACP] + L-lysyl-[protein] = N(6)-octanoyl-L-lysyl-[protein] + holo-[ACP] + H(+). It functions in the pathway protein modification; protein lipoylation via endogenous pathway; protein N(6)-(lipoyl)lysine from octanoyl-[acyl-carrier-protein]: step 1/2. Functionally, catalyzes the transfer of endogenously produced octanoic acid from octanoyl-acyl-carrier-protein onto the lipoyl domains of lipoate-dependent enzymes. Lipoyl-ACP can also act as a substrate although octanoyl-ACP is likely to be the physiological substrate. In Thiobacillus denitrificans (strain ATCC 25259 / T1), this protein is Octanoyltransferase.